A 573-amino-acid polypeptide reads, in one-letter code: Arylsulfatase I (573 aa).

Residues 1–23 form the signal peptide; the sequence is MHALTGLSLVSLLSFGYLSWDWA. Positions 56, 57, and 94 each coordinate Ca(2+). C94 (nucleophile) is an active-site residue. Position 94 is a 3-oxoalanine (Cys) (C94). Residue K148 coordinates substrate. H150 is a catalytic residue. H240 serves as a coordination point for substrate. 2 N-linked (GlcNAc...) asparagine glycosylation sites follow: N277 and N289. Ca(2+) is bound by residues D298 and N299. K316 contributes to the substrate binding site. N-linked (GlcNAc...) asparagine glycosylation is found at N467 and N497. The segment at 516-550 is disordered; that stretch reads FNGGAWGPWASDEEEEEEEEEAGRARSFSRGRRKK. The span at 526 to 536 shows a compositional bias: acidic residues; that stretch reads SDEEEEEEEEE.

It belongs to the sulfatase family. Ca(2+) serves as cofactor. Post-translationally, the oxidation of Cys-94 residue to 3-oxoalanine (also known as C(alpha)-formylglycine) by SUMF1/Sulfatase-modifying factor 1, seems critical for catalytic activity.

The protein localises to the secreted. Its subcellular location is the endoplasmic reticulum. Its function is as follows. Displays arylsulfatase activity at neutral pH, when co-expressed with SUMF1; arylsulfatase activity is measured in the secretion medium of retinal cell line, but no activity is recorded when measured in cell extracts. The polypeptide is Arylsulfatase I (ARSI) (Canis lupus familiaris (Dog)).